The primary structure comprises 206 residues: Ras-related protein Rab7 (206 aa).

Residues 15-22 (GDSGVGKT), 63-67 (DTAGQ), and 125-128 (NKVD) contribute to the GTP site. 2 S-geranylgeranyl cysteine lipidation sites follow: Cys-205 and Cys-206.

It belongs to the small GTPase superfamily. Rab family.

The protein localises to the cell membrane. In terms of biological role, protein transport. Probably involved in vesicular traffic. In Cenchrus ciliaris (Buffelgrass), this protein is Ras-related protein Rab7.